Here is a 246-residue protein sequence, read N- to C-terminus: Cell division protein ZapD (246 aa).

It belongs to the ZapD family. In terms of assembly, interacts with FtsZ.

It is found in the cytoplasm. Cell division factor that enhances FtsZ-ring assembly. Directly interacts with FtsZ and promotes bundling of FtsZ protofilaments, with a reduction in FtsZ GTPase activity. The protein is Cell division protein ZapD of Vibrio cholerae serotype O1 (strain ATCC 39541 / Classical Ogawa 395 / O395).